We begin with the raw amino-acid sequence, 87 residues long: Selenoprotein W (87 aa).

The cysteinyl-selenocysteine (Cys-Sec); redox-active cross-link spans 10-13; that stretch reads CGAU. Residue Sec-13 is a non-standard amino acid, selenocysteine. Cys-37 carries the S-glutathionyl cysteine modification.

The protein belongs to the SelWTH family. Selenoprotein W subfamily. As to quaternary structure, interacts with DPYSL2, PRDX1, YWHAB, YWHAG, HSP70 and HSP90.

The protein localises to the cytoplasm. Plays a role as a glutathione (GSH)-dependent antioxidant. May be involved in a redox-related process. May play a role in the myopathies of selenium deficiency. This chain is Selenoprotein W, found in Sus scrofa (Pig).